A 131-amino-acid chain; its full sequence is Holo-[acyl-carrier-protein] synthase (131 aa).

Residues aspartate 8 and glutamate 59 each contribute to the Mg(2+) site.

This sequence belongs to the P-Pant transferase superfamily. AcpS family. It depends on Mg(2+) as a cofactor.

Its subcellular location is the cytoplasm. It catalyses the reaction apo-[ACP] + CoA = holo-[ACP] + adenosine 3',5'-bisphosphate + H(+). Its function is as follows. Transfers the 4'-phosphopantetheine moiety from coenzyme A to a Ser of acyl-carrier-protein. This is Holo-[acyl-carrier-protein] synthase from Rickettsia rickettsii (strain Sheila Smith).